The primary structure comprises 508 residues: Citrate lyase alpha chain (508 aa).

As to quaternary structure, oligomer with a subunit composition of (alpha,beta,gamma)6.

The protein resides in the cytoplasm. It catalyses the reaction citrate = oxaloacetate + acetate. The enzyme catalyses citrate + acetyl-CoA = (3S)-citryl-CoA + acetate. Functionally, represents a citrate:acetyl-ACP transferase. The sequence is that of Citrate lyase alpha chain (citF) from Klebsiella pneumoniae.